Consider the following 206-residue polypeptide: Cytidylate kinase (206 aa).

7 to 15 (GVAASGKSS) contributes to the ATP binding site.

Belongs to the cytidylate kinase family. Type 1 subfamily.

Its subcellular location is the cytoplasm. It catalyses the reaction CMP + ATP = CDP + ADP. It carries out the reaction dCMP + ATP = dCDP + ADP. The chain is Cytidylate kinase from Deinococcus radiodurans (strain ATCC 13939 / DSM 20539 / JCM 16871 / CCUG 27074 / LMG 4051 / NBRC 15346 / NCIMB 9279 / VKM B-1422 / R1).